Consider the following 467-residue polypeptide: 3-isopropylmalate dehydratase large subunit (467 aa).

The [4Fe-4S] cluster site is built by cysteine 347, cysteine 407, and cysteine 410.

Belongs to the aconitase/IPM isomerase family. LeuC type 1 subfamily. In terms of assembly, heterodimer of LeuC and LeuD. Requires [4Fe-4S] cluster as cofactor.

The catalysed reaction is (2R,3S)-3-isopropylmalate = (2S)-2-isopropylmalate. The protein operates within amino-acid biosynthesis; L-leucine biosynthesis; L-leucine from 3-methyl-2-oxobutanoate: step 2/4. Its function is as follows. Catalyzes the isomerization between 2-isopropylmalate and 3-isopropylmalate, via the formation of 2-isopropylmaleate. The chain is 3-isopropylmalate dehydratase large subunit from Trichormus variabilis (strain ATCC 29413 / PCC 7937) (Anabaena variabilis).